Here is a 473-residue protein sequence, read N- to C-terminus: Putative F-box/LRR-repeat protein At3g59170 (473 aa).

The F-box domain occupies 6-54 (KDMINVLPDALLCHILSFLTTKEAASTSLLSRRWRYLLAFVPNLEFDDS). 5 LRR repeats span residues 168 to 194 (TIKI…YLQS), 196 to 221 (MFDE…VLDG), 229 to 254 (SFTV…GYMH), 333 to 364 (VLYL…TIKS), and 365 to 390 (DPNV…VFQG).

The sequence is that of Putative F-box/LRR-repeat protein At3g59170 from Arabidopsis thaliana (Mouse-ear cress).